The primary structure comprises 2052 residues: Genome polyprotein (2052 aa).

Short sequence motifs ((L)YPX(n)L motif) lie at residues 167–171 (YPHGL) and 200–205 (YPVWEL). The segment at 502–522 (TVSTEQNVPDPQVGIKGKANR) is disordered. Residues 760–830 (MMSRIAAGDL…PRKMKGLFSQ (71 aa)) form an involved in P1-2A pentamerization region. A helical membrane pass occupies residues 1005–1025 (TVEIINIVLCFIKSGILLYVI). Residues 1037-1064 (IGLLRVMNYADIGCSVISCGKVFSKMLE) form a membrane-penetrating ability region. Residues 1121-1146 (KKKDVLNILKDNQQKIEKAIEEADNF) adopt a coiled-coil conformation. Residues 1296-1316 (WVAVGAAVGILGLLVGGWFVY) form a helical membrane-spanning segment. Position 1333 is an O-(5'-phospho-RNA)-tyrosine (Y1333). Residues 1348 to 1562 (DPVESQSTLE…VAKLITQEMF (215 aa)) enclose the Peptidase C3 domain. Catalysis depends on for protease 3C activity residues H1397, D1437, and C1525. The 122-residue stretch at 1810 to 1931 (DVGLDLDFSA…VFSRDVQIDN (122 aa)) folds into the RdRp catalytic domain.

This sequence belongs to the picornaviridae polyprotein family. As to quaternary structure, homodimer. Homomultimer; probably interacts with membranes in a multimeric form. Seems to assemble into amyloid-like fibers. In terms of assembly, homodimer. Monomer. Interacts with protein 3CD. Interacts with host ACBD3. As to quaternary structure, interacts with protein 3AB. In terms of assembly, interacts with human MAVS. Homodimer; disulfide-linked. As to quaternary structure, homopentamer. Homooligomer. In terms of assembly, interacts with capsid protein VP2. Interacts with capsid protein VP3. Interacts with capsid protein VP1. Interacts with capsid protein VP3. As to quaternary structure, interacts with capsid protein VP1. Interacts with capsid protein VP2. Post-translationally, specific enzymatic cleavages by viral protease in vivo yield a variety of precursors and mature proteins. Polyprotein processing intermediates are produced, such as P1-2A which is a functional precursor of the structural proteins, VP0 which is a VP4-VP2 precursor, VP1-2A precursor, 3ABC precursor which is a stable and catalytically active precursor of 3A, 3B and 3C proteins, 3AB and 3CD precursors. The assembly signal 2A is removed from VP1-2A by a host protease, possibly host Cathepsin L. This cleavage occurs over a region of 3 amino-acids probably generating VP1 proteins with heterogeneous C-termini. In terms of processing, during virion maturation, immature virions are rendered infectious following cleavage of VP0 into VP4 and VP2. This maturation seems to be an autocatalytic event triggered by the presence of RNA in the capsid and is followed by a conformational change of the particle. The assembly signal 2A is removed from VP1-2A by a host protease, possibly host Cathepsin L in naked virions. This cleavage does not occur in enveloped virions. This cleavage occurs over a region of 3 amino-acids probably generating VP1 proteins with heterogeneous C-termini. Post-translationally, VPg is uridylylated prior to priming replication into VPg-pUpU. In terms of processing, unlike other picornaviruses, does not seem to be myristoylated.

It is found in the virion. Its subcellular location is the host endosome. It localises to the host multivesicular body. The protein localises to the host membrane. The protein resides in the host mitochondrion outer membrane. It is found in the host cytoplasm. Its subcellular location is the host cytoplasmic vesicle membrane. The enzyme catalyses RNA(n) + a ribonucleoside 5'-triphosphate = RNA(n+1) + diphosphate. The catalysed reaction is a ribonucleoside 5'-triphosphate + H2O = a ribonucleoside 5'-diphosphate + phosphate + H(+). It carries out the reaction Selective cleavage of Gln-|-Gly bond in the poliovirus polyprotein. In other picornavirus reactions Glu may be substituted for Gln, and Ser or Thr for Gly.. Its function is as follows. Capsid proteins VP1, VP2, and VP3 form a closed capsid enclosing the viral positive strand RNA genome. All these proteins contain a beta-sheet structure called beta-barrel jelly roll. Together they form an icosahedral capsid (T=3) composed of 60 copies of each VP1, VP2, and VP3, with a diameter of approximately 300 Angstroms. VP1 is situated at the 12 fivefold axes, whereas VP2 and VP3 are located at the quasi-sixfold axes. The naked capsid interacts with the host receptor HAVCR1 to provide virion attachment to and probably entry into the target cell. Functionally, VP0 precursor is a component of the immature procapsids. Plays a role in the assembly of the 12 pentamers into an icosahedral structure. Has not been detected in mature virions, supposedly owing to its small size. In terms of biological role, precursor component of immature procapsids that corresponds to an extended form of the structural protein VP1. After maturation, possibly by the host Cathepsin L, the assembly signal 2A is cleaved to give rise to the mature VP1 protein. Its function is as follows. Functions as a viroporin. Affects membrane integrity and causes an increase in membrane permeability. Involved in host intracellular membrane rearrangements probably to give rise to the viral factories. Does not disrupt calcium homeostasis or glycoprotein trafficking. Antagonizes the innate immune response of the host by suppressing IFN-beta synthesis, which it achieves by interfering with the RIG-I/IFIH1 pathway. Functionally, affects membrane integrity and causes an increase in membrane permeability. Associates with and induces structural rearrangements of intracellular membranes. Displays RNA-binding activity. In terms of biological role, the precursor 3ABC is targeted to the mitochondrial membrane where protease 3C activity cleaves and inhibits the host antiviral protein MAVS, thereby disrupting activation of IRF3 through the IFIH1/MDA5 pathway. In vivo, the protease activity of 3ABC precursor is more efficient in cleaving the 2BC precursor than that of protein 3C. The 3ABC precursor may therefore play a role in the proteolytic processing of the polyprotein. Possible viroporin. Its function is as follows. Interacts with the 3CD precursor and with RNA structures found at both the 5'- and 3'-termini of the viral genome. Since the 3AB precursor contains the hydrophobic domain 3A, it probably anchors the whole viral replicase complex to intracellular membranes on which viral RNA synthesis occurs. Functionally, may serve as membrane anchor to the 3AB and 3ABC precursors via its hydrophobic domain. May interact with RNA. Acts as a primer for viral RNA replication and remains covalently bound to viral genomic RNA. VPg is uridylylated prior to priming replication into VPg-pUpU. The VPg-pUpU is then used as primer on the genomic RNA poly(A) by the RNA-dependent RNA polymerase to replicate the viral genome. In terms of biological role, cysteine protease that generates mature viral proteins from the precursor polyprotein. In addition to its proteolytic activity, it binds to viral RNA, and thus influences viral genome replication. RNA and substrate bind cooperatively to the protease. Cleaves IKBKG/NEMO to impair innate immune signaling. Cleaves host PABPC1 which may participate in the switch of viral translation to RNA synthesis. Its function is as follows. Interacts with the 3AB precursor and with RNA structures found at both the 5'- and 3'-termini of the viral genome. Disrupts TLR3 signaling by degrading the host adapter protein TICAM1/TRIF. Functionally, RNA-directed RNA polymerase 3D-POL replicates genomic and antigenomic RNA by recognizing replications specific signals. This Homo sapiens (Human) protein is Genome polyprotein.